A 654-amino-acid polypeptide reads, in one-letter code: Glutamyl-tRNA(Gln) amidotransferase subunit B, mitochondrial (654 aa).

A mitochondrion-targeting transit peptide spans 1–8; that stretch reads MGRIPTRE. The interval 79-101 is disordered; it reads DQAKASKAQAKGKKKRSSADNQT.

Belongs to the GatB/GatE family. GatB subfamily. Subunit of the heterotrimeric GatCAB amidotransferase (AdT) complex, composed of A, B and C subunits.

It is found in the mitochondrion. The enzyme catalyses L-glutamyl-tRNA(Gln) + L-glutamine + ATP + H2O = L-glutaminyl-tRNA(Gln) + L-glutamate + ADP + phosphate + H(+). In terms of biological role, allows the formation of correctly charged Gln-tRNA(Gln) through the transamidation of misacylated Glu-tRNA(Gln) in the mitochondria. The reaction takes place in the presence of glutamine and ATP through an activated gamma-phospho-Glu-tRNA(Gln). The sequence is that of Glutamyl-tRNA(Gln) amidotransferase subunit B, mitochondrial from Pyricularia oryzae (strain 70-15 / ATCC MYA-4617 / FGSC 8958) (Rice blast fungus).